The chain runs to 386 residues: Agamous-like MADS-box protein AGL30 (386 aa).

One can recognise an MADS-box domain in the interval 1–53; the sequence is MGRVKLKIKKLENTNGRQSTFAKRKNGILKKANELSILCDIDIVLLMFSPTGK. Residues 341–360 are disordered; it reads PDSSAYNDNTNQTRFGSSSS. A compositionally biased stretch (polar residues) spans 344-356; sequence SAYNDNTNQTRFG.

As to quaternary structure, forms heterodimers with AGL66 and AGL104. Expressed in pollen.

The protein localises to the nucleus. Functionally, probable transcription factor that forms heterodimers with the MADS-box proteins AGL66 and AGL104 and is involved in the regulation of pollen maturation at the late stages of pollen development and pollen tube growth. The polypeptide is Agamous-like MADS-box protein AGL30 (Arabidopsis thaliana (Mouse-ear cress)).